Here is a 602-residue protein sequence, read N- to C-terminus: Probable translation initiation factor IF-2 (602 aa).

The 221-residue stretch at 9–229 (LRQPIVVVLG…GLTQNYMKNK (221 aa)) folds into the tr-type G domain. A G1 region spans residues 18–25 (GHVDHGKT). 18 to 25 (GHVDHGKT) is a binding site for GTP. Residues 43-47 (EMTQE) form a G2 region. Positions 82 to 85 (DTPG) are G3. GTP-binding positions include 82–86 (DTPGH) and 136–139 (NKID). Residues 136–139 (NKID) are G4. Residues 204 to 206 (SAK) are G5.

It belongs to the TRAFAC class translation factor GTPase superfamily. Classic translation factor GTPase family. IF-2 subfamily.

Its function is as follows. Function in general translation initiation by promoting the binding of the formylmethionine-tRNA to ribosomes. Seems to function along with eIF-2. The sequence is that of Probable translation initiation factor IF-2 (infB) from Sulfolobus acidocaldarius (strain ATCC 33909 / DSM 639 / JCM 8929 / NBRC 15157 / NCIMB 11770).